A 122-amino-acid chain; its full sequence is Protein preY, mitochondrial (122 aa).

Residues 1 to 40 constitute a mitochondrion transit peptide; it reads MLAVRAWGRTYNTLVQRKLNAACPTGALPAVTLRPLHCSL. Residues 56–102 enclose the TRM112 domain; the sequence is DPTLLQFLVCPLSRKSLRYEESTNELINDELGIAYPIVDGIPNMIPQ.

It belongs to the PREY family.

It is found in the mitochondrion. Functionally, in mitochondria, S-adenosylmethionine-dependent methyltransferase chaperone that supports both coenzyme Q biosynthesis and NADH:ubiquinone oxidoreductase complex (complex I, MT-ND1) assembly. This chain is Protein preY, mitochondrial (pyurf), found in Xenopus tropicalis (Western clawed frog).